Here is a 206-residue protein sequence, read N- to C-terminus: Recombination protein RecR (206 aa).

The C4-type zinc finger occupies 60-75 (CARCNTFCEGGLCDIC). One can recognise a Toprim domain in the interval 83–178 (RRLMVVHMPA…KVSRLSQGIP (96 aa)).

It belongs to the RecR family.

Its function is as follows. May play a role in DNA repair. It seems to be involved in an RecBC-independent recombinational process of DNA repair. It may act with RecF and RecO. The polypeptide is Recombination protein RecR (Neisseria gonorrhoeae (strain NCCP11945)).